The following is a 306-amino-acid chain: Curved DNA-binding protein (306 aa).

The J domain occupies 5-69 (DYYAIMGVKP…QRRAEYDQMW (65 aa)).

The protein resides in the cytoplasm. It localises to the nucleoid. Functionally, DNA-binding protein that preferentially recognizes a curved DNA sequence. It is probably a functional analog of DnaJ; displays overlapping activities with DnaJ, but functions under different conditions, probably acting as a molecular chaperone in an adaptive response to environmental stresses other than heat shock. Lacks autonomous chaperone activity; binds native substrates and targets them for recognition by DnaK. Its activity is inhibited by the binding of CbpM. In Shigella sonnei (strain Ss046), this protein is Curved DNA-binding protein.